Here is a 373-residue protein sequence, read N- to C-terminus: ATP phosphoribosyltransferase regulatory subunit (373 aa).

This sequence belongs to the class-II aminoacyl-tRNA synthetase family. HisZ subfamily. In terms of assembly, heteromultimer composed of HisG and HisZ subunits.

It localises to the cytoplasm. Its pathway is amino-acid biosynthesis; L-histidine biosynthesis; L-histidine from 5-phospho-alpha-D-ribose 1-diphosphate: step 1/9. Functionally, required for the first step of histidine biosynthesis. May allow the feedback regulation of ATP phosphoribosyltransferase activity by histidine. The chain is ATP phosphoribosyltransferase regulatory subunit from Rhizobium etli (strain CIAT 652).